The primary structure comprises 103 residues: Integration host factor subunit beta (103 aa).

The protein belongs to the bacterial histone-like protein family. As to quaternary structure, heterodimer of an alpha and a beta chain.

Functionally, this protein is one of the two subunits of integration host factor, a specific DNA-binding protein that functions in genetic recombination as well as in transcriptional and translational control. The protein is Integration host factor subunit beta of Bradyrhizobium sp. (strain BTAi1 / ATCC BAA-1182).